The sequence spans 704 residues: Ribosomal RNA large subunit methyltransferase K/L (704 aa).

Residues 43–154 enclose the THUMP domain; it reads TMYQSLLWSR…KEKASLSLDL (112 aa).

Belongs to the methyltransferase superfamily. RlmKL family.

Its subcellular location is the cytoplasm. The enzyme catalyses guanosine(2445) in 23S rRNA + S-adenosyl-L-methionine = N(2)-methylguanosine(2445) in 23S rRNA + S-adenosyl-L-homocysteine + H(+). The catalysed reaction is guanosine(2069) in 23S rRNA + S-adenosyl-L-methionine = N(2)-methylguanosine(2069) in 23S rRNA + S-adenosyl-L-homocysteine + H(+). Functionally, specifically methylates the guanine in position 2445 (m2G2445) and the guanine in position 2069 (m7G2069) of 23S rRNA. The chain is Ribosomal RNA large subunit methyltransferase K/L from Proteus mirabilis (strain HI4320).